The chain runs to 340 residues: Solute carrier family 35 member G3 (340 aa).

Positions 11-33 (PDFTQPSPPSTPASLPSKHHHRC) are disordered. Helical transmembrane passes span 39–59 (TKGL…VGPF), 69–89 (LPSL…ALLL), 107–127 (FLHA…VQVV), 160–180 (AWCG…PGLG), 189–209 (LYTA…SLGL), 223–243 (TVAF…LFVL), 257–277 (CVVA…YAVT), 283–303 (LVCA…YYVL), and 307–327 (VAPS…IITA). Residues 51–176 (LSAGFVGPFS…STLGLIIIVG (126 aa)) enclose the EamA 1 domain. The region spanning 274-327 (YAVTKAHPALVCAVLHSEVVVALMLQYYVLYETVAPSDIMGAGVVLGSIAIITA) is the EamA 2 domain.

The protein belongs to the SLC35G solute transporter family.

Its subcellular location is the membrane. This chain is Solute carrier family 35 member G3 (Slc35g3), found in Mus musculus (Mouse).